The sequence spans 262 residues: Ribosome-recycling factor, mitochondrial (262 aa).

The N-terminal 55 residues, 1–55 (MASGIRCFRLLHPAFRSYHAALTRPVSEVSMKTVSGRQHGHRQYSAYPAVPVRHF), are a transit peptide targeting the mitochondrion.

The protein belongs to the RRF family.

Its subcellular location is the mitochondrion. Responsible for the disassembly of ribosomes from messenger RNA at the termination of mitochondrial protein biosynthesis. Acts in collaboration with GFM2. Promotes mitochondrial ribosome recycling by dissolution of intersubunit contacts. The chain is Ribosome-recycling factor, mitochondrial (Mrrf) from Mus musculus (Mouse).